Consider the following 542-residue polypeptide: Chaperonin GroEL 3 (542 aa).

ATP contacts are provided by residues threonine 30–proline 33, lysine 51, aspartate 87–threonine 91, glycine 415, and aspartate 496.

This sequence belongs to the chaperonin (HSP60) family. As to quaternary structure, forms a cylinder of 14 subunits composed of two heptameric rings stacked back-to-back. Interacts with the co-chaperonin GroES.

The protein resides in the cytoplasm. The catalysed reaction is ATP + H2O + a folded polypeptide = ADP + phosphate + an unfolded polypeptide.. In terms of biological role, together with its co-chaperonin GroES, plays an essential role in assisting protein folding. The GroEL-GroES system forms a nano-cage that allows encapsulation of the non-native substrate proteins and provides a physical environment optimized to promote and accelerate protein folding. The protein is Chaperonin GroEL 3 of Sinorhizobium medicae (strain WSM419) (Ensifer medicae).